The sequence spans 1374 residues: F-actin-uncapping protein LRRC16A (1374 aa).

At methionine 1 the chain carries N-acetylmethionine. Position 122 is a phosphoserine (serine 122). 10 LRR repeats span residues 245 to 269 (SNRL…LAGA), 275 to 298 (NSGL…SLSI), 304 to 327 (PKGL…SLCQ), 336 to 363 (ASTL…FLAQ), 391 to 418 (LQCL…SFKQ), 423 to 447 (SLAL…LLLG), 485 to 510 (IHNI…VWLS), 547 to 570 (DSPL…IINA), 574 to 597 (NTSL…MLAK), and 658 to 682 (LQKI…AYRL). Residues 714–738 (GDAIQEDLKAAERLMRDAKNSKTLL) adopt a coiled-coil conformation. Position 920 is a phosphothreonine (threonine 920). Disordered regions lie at residues 961-982 (PFPS…PSEE) and 1040-1374 (KMDC…FIFV). The stretch at 962 to 985 (FPSVRQEKRSSGLISELPSEEGRR) is one LRR 11 repeat. Residues 962-1084 (FPSVRQEKRS…LIKSRSRSER (123 aa)) form an inhibits capping activity of CP region. At serine 972 the chain carries Phosphoserine. Residues 1040-1064 (KMDCKRSSSRSSDAHELGEGDEKKK) are compositionally biased toward basic and acidic residues. The necessary for localization at the cell membrane stretch occupies residues 1058 to 1092 (EGDEKKKRDSRRSGFLNLIKSRSRSERPPTVLMTE). Serine 1096 is modified (phosphoserine). Basic and acidic residues-rich tracts occupy residues 1108–1132 (TTRK…KTPE) and 1141–1150 (EAGRAERSDS). The segment covering 1191 to 1204 (VISQDPSSPVSCNT) has biased composition (polar residues). Phosphothreonine is present on threonine 1229. The span at 1232–1244 (KNAKAEPRVDGGC) shows a compositional bias: basic and acidic residues. Over residues 1245–1263 (RSRSSSSMPTSPKPLLQSP) the composition is skewed to low complexity. Phosphoserine is present on residues serine 1281, serine 1289, serine 1291, serine 1295, serine 1319, serine 1328, and serine 1335. Over residues 1317–1330 (QNSSQSSPRSFSQE) the composition is skewed to low complexity. The segment covering 1343–1356 (QEQKQRSSGKDGHQ) has biased composition (basic and acidic residues). Serine 1363 carries the phosphoserine modification.

The protein belongs to the CARMIL family. Homodimer. Interacts (via C-terminus) with heterodimeric capping protein (CP); this interaction uncaps barbed ends capped by CP, enhances barbed-end actin polymerization and promotes lamellipodial formation and cell migration. Interacts with MYO1E. Interacts with TRIO.

Its subcellular location is the cytoplasm. The protein localises to the cytoskeleton. The protein resides in the cell membrane. It localises to the cell projection. It is found in the lamellipodium. In terms of biological role, cell membrane-cytoskeleton-associated protein that plays a role in the regulation of actin polymerization at the barbed end of actin filaments. Prevents F-actin heterodimeric capping protein (CP) activity at the leading edges of migrating cells, and hence generates uncapped barbed ends and enhances actin polymerization, however, seems unable to nucleate filaments. Plays a role in lamellipodial protrusion formations and cell migration. The protein is F-actin-uncapping protein LRRC16A of Mus musculus (Mouse).